The chain runs to 616 residues: Chaperone protein HscA (616 aa).

It belongs to the heat shock protein 70 family.

Its function is as follows. Chaperone involved in the maturation of iron-sulfur cluster-containing proteins. Has a low intrinsic ATPase activity which is markedly stimulated by HscB. Involved in the maturation of IscU. This Escherichia fergusonii (strain ATCC 35469 / DSM 13698 / CCUG 18766 / IAM 14443 / JCM 21226 / LMG 7866 / NBRC 102419 / NCTC 12128 / CDC 0568-73) protein is Chaperone protein HscA.